Consider the following 186-residue polypeptide: Large ribosomal subunit protein bL17 (186 aa).

Residues 123-186 form a disordered region; sequence SEADRARRVK…ADEAEGSSED (64 aa). The span at 139–177 shows a compositional bias: low complexity; that stretch reads EAAAAAPQAAVEPEAVEAAPAPDAPEAAPEAEAAAPQPA.

It belongs to the bacterial ribosomal protein bL17 family. In terms of assembly, part of the 50S ribosomal subunit. Contacts protein L32.

The sequence is that of Large ribosomal subunit protein bL17 from Mycobacterium avium (strain 104).